We begin with the raw amino-acid sequence, 1807 residues long: Triacetic acid lactone synthase cle1 (1807 aa).

Residues 107–280 form the Starter acyltransferase (SAT) domain; sequence LAPLTVIIHI…ANVPVNGRYH (174 aa). A Ketosynthase family 3 (KS3) domain is found at 385-795; that stretch reads DTSIAIIGAA…GNNTAIIICQ (411 aa). Active-site for beta-ketoacyl synthase activity residues include cysteine 540, histidine 675, and histidine 718. The 258-residue stretch at 919-1176 folds into the Malonyl-CoA:ACP transacylase (MAT) domain; it reads SKAVYDSSYH…LGPCIWLEAG (258 aa). The segment at 1272 to 1398 is N-terminal hotdog fold; the sequence is PVIDGLISLE…GTVIVDDERT (127 aa). The PKS/mFAS DH domain maps to 1272–1573; the sequence is PVIDGLISLE…FIRTSTSALQ (302 aa). The active-site Proton acceptor; for dehydratase activity is the histidine 1304. Residues 1416 to 1573 form a C-terminal hotdog fold region; that stretch reads TVFSAPRGVA…FIRTSTSALQ (158 aa). Residue aspartate 1475 is the Proton donor; for dehydratase activity of the active site. Residues 1605–1679 form the Carrier 1 domain; that stretch reads ANVWSLTVNL…IICERITAQT (75 aa). Serine 1639 is subject to O-(pantetheine 4'-phosphoryl)serine. The disordered stretch occupies residues 1690–1720; the sequence is GNSTSNTTSSSSQCTPSSSFESDSDTQATEL. The span at 1692–1710 shows a compositional bias: low complexity; the sequence is STSNTTSSSSQCTPSSSFE. A Carrier 2 domain is found at 1721-1797; the sequence is SLSAPTMEKV…DLHALVMRRG (77 aa). At serine 1757 the chain carries O-(pantetheine 4'-phosphoryl)serine.

The cofactor is pantetheine 4'-phosphate.

The protein operates within secondary metabolite biosynthesis; terpenoid biosynthesis. Non-reducing polyketide synthase; part of the cluster A that mediates the biosynthesis of chevalone E and its oxidized derivatives that possess a unique five-membered lactone ring and can synergistically enhance the cytotoxicity of doxorubicin (DOX) in breast cancer cells. Within the pathway, cle1 takes part to the biosynthesis of the molecular scaffold via the synthesis the alpha-pyrone triacetic acid lactone (TAL) from one molecule of acetyl-CoA and two molecules of malonyl-CoA. The molecular scaffold is commonly biosynthesized by a series of enzymes including the non-reducing polyketide synthase (NR-PKS) cle1 that produces the alpha-pyrone triacetic acid lactone (TAL); The membrane-bound prenyltransferase cle5 that accepts TAL as its substrate to perform a C-3 geranylgeranylation reaction, in which the pathway-dedicated GGPS cle6 is required to provide GGPP, the other substrate of cle5; the FAD-dependent monooxygenase Cle3 that forms an (S)-epoxide ring at the terminal olefin of the geranylgeranyl group; and the terpene cyclase Cle7 that catalyzes the cyclization of the prenyl group that yields the pentacyclic pathway intermediate chevalone E. Chevalone E can derivatize into seven new oxidized analogs by the cytochrome P450 monooxygenases cle2 (acting at C-20) and cle4 (acting at C-11 and C-12). The chain is Triacetic acid lactone synthase cle1 from Aspergillus versicolor.